The chain runs to 1615 residues: Regulating synaptic membrane exocytosis protein 1 (1615 aa).

Positions 1–26 (MSSAVGPRGPRPPTVPPPMQELPDLS) are disordered. The span at 9–20 (GPRPPTVPPPMQ) shows a compositional bias: pro residues. Residues 22 to 205 (LPDLSHLTEE…TKSGAWFFGS (184 aa)) enclose the RabBD domain. Residues 133–193 (KDDAPTCGIC…VCNLCRKQQE (61 aa)) form an FYVE-type zinc finger. Cysteine 139, cysteine 142, cysteine 155, cysteine 158, cysteine 163, cysteine 166, cysteine 185, and cysteine 188 together coordinate Zn(2+). Residues 205-569 (SGPQQPSQDG…CEDVELESES (365 aa)) form a disordered region. The span at 206–222 (GPQQPSQDGTLSDTATG) shows a compositional bias: polar residues. The span at 227–240 (VPREKKARLQERSR) shows a compositional bias: basic and acidic residues. Positions 241–256 (SQTPLSTAAVSSQDTA) are enriched in polar residues. Over residues 327 to 379 (ADERERKERRETRRLEKGRSQDYSDRPEKRDNGRVAEDQKQRKEEEYQTRYRS) the composition is skewed to basic and acidic residues. Residues 399-410 (MHARVSRARHER) show a composition bias toward basic residues. Positions 421 to 459 (EAAAAAPAEATAGKRAPATARVSPPESPRARAAAAQPPT) are enriched in low complexity. Over residues 460-475 (EHGPPPPRPAPGPAEP) the composition is skewed to pro residues. The span at 476-489 (PEPRVPEPLRKQGR) shows a compositional bias: basic and acidic residues. Polar residues predominate over residues 511–523 (RNDSLSSDQSESV). A Phosphoserine modification is found at serine 514. Positions 529–541 (KPHRPKRGGKRRQ) are enriched in basic residues. Positions 559–569 (SCEDVELESES) are enriched in acidic residues. Serine 592 carries the post-translational modification Phosphoserine. Residues 619–705 (RTTMPKESGA…EPQVEIIVSR (87 aa)) form the PDZ domain. A disordered region spans residues 712-746 (RIPESSHPPLESSSSSFESQKMERPSISVISPTSP). Over residues 714–730 (PESSHPPLESSSSSFES) the composition is skewed to low complexity. 2 positions are modified to phosphoserine: serine 742 and serine 745. Residues 756–879 (LPGQLSVKLW…ALLDDEPHWY (124 aa)) enclose the C2 1 domain. The disordered stretch occupies residues 884-1201 (HDESSLPLPQ…RQLPQVPVRS (318 aa)). Serine 895 carries the post-translational modification Phosphoserine. Residues 949 to 958 (ATTLTVPEQQ) show a composition bias toward polar residues. The residue at position 991 (serine 991) is a Phosphoserine. Positions 1006–1023 (RHHDASRSPADHRSRHVE) are enriched in basic and acidic residues. Serine 1045 is modified (phosphoserine). The span at 1078-1092 (SPERERHSRKSERCS) shows a compositional bias: basic and acidic residues. A compositionally biased stretch (polar residues) spans 1173 to 1187 (QGSPTQSPPADTSFG). Serine 1175 is modified (phosphoserine). Position 1177 is a phosphothreonine (threonine 1177). Phosphoserine is present on residues serine 1179, serine 1231, serine 1233, serine 1234, serine 1262, serine 1263, and serine 1265. The interval 1256–1313 (DNASAKSSDSDVSDVSAISRASSTSRLSSTSFMSEQSERPRGRISSFTPKMQGRRMGT) is disordered. A compositionally biased stretch (low complexity) spans 1268 to 1289 (SDVSAISRASSTSRLSSTSFMS). Serine 1339 is subject to Phosphoserine. The segment at 1368-1397 (RSRSTSQLSQTESGHKKLKSTIQRSTETGM) is disordered. Residues 1461 to 1579 (AMGDIQIGME…DLSSMVIGWY (119 aa)) enclose the C2 2 domain. Phosphoserine occurs at positions 1600, 1603, 1606, and 1615.

As to quaternary structure, interacts with RAB3C, RAB10, RAB26 and RAB37. Binds SNAP25, SYT1 and CACNA1B. Interaction with SYT1 is enhanced by calcium ions. Interaction with SNAP25 is weaker in the presence of calcium ions. Binds RAB3A, RAB3B and RAB3D that have been activated by GTP-binding. Binds UNC13A. Interacts with TSPOAP1 and RIMBP2. Interacts with PPFIA3 and PPFIA4. Interacts with ERC1. Post-translationally, phosphorylated by BRSK1. Highly expressed in hippocampus, brain cortex, cerebellum and olfactory bulb. Detected at lower levels in midbrain, hindbrain and spinal cord. Detected retina and in spinal cord motor neurons.

It is found in the cell membrane. The protein resides in the synapse. The protein localises to the presynaptic cell membrane. In terms of biological role, rab effector involved in exocytosis. May act as scaffold protein that regulates neurotransmitter release at the active zone. Essential for maintaining normal probability of neurotransmitter release and for regulating release during short-term synaptic plasticity. Plays a role in dendrite formation by melanocytes. The polypeptide is Regulating synaptic membrane exocytosis protein 1 (Rims1) (Rattus norvegicus (Rat)).